The primary structure comprises 504 residues: Pup--protein ligase (504 aa).

Glutamate 30 contacts Mg(2+). Arginine 74 is an ATP binding site. Tyrosine 76 provides a ligand contact to Mg(2+). Aspartate 78 acts as the Proton acceptor in catalysis. A Mg(2+)-binding site is contributed by glutamate 84. Residues threonine 87 and tryptophan 459 each coordinate ATP.

It belongs to the Pup ligase/Pup deamidase family. Pup-conjugating enzyme subfamily.

It carries out the reaction ATP + [prokaryotic ubiquitin-like protein]-L-glutamate + [protein]-L-lysine = ADP + phosphate + N(6)-([prokaryotic ubiquitin-like protein]-gamma-L-glutamyl)-[protein]-L-lysine.. The protein operates within protein degradation; proteasomal Pup-dependent pathway. It functions in the pathway protein modification; protein pupylation. In terms of biological role, catalyzes the covalent attachment of the prokaryotic ubiquitin-like protein modifier Pup to the proteasomal substrate proteins, thereby targeting them for proteasomal degradation. This tagging system is termed pupylation. The ligation reaction involves the side-chain carboxylate of the C-terminal glutamate of Pup and the side-chain amino group of a substrate lysine. This is Pup--protein ligase from Corynebacterium urealyticum (strain ATCC 43042 / DSM 7109).